We begin with the raw amino-acid sequence, 389 residues long: Alkanesulfonate monooxygenase (389 aa).

The protein belongs to the SsuD family.

The catalysed reaction is an alkanesulfonate + FMNH2 + O2 = an aldehyde + FMN + sulfite + H2O + 2 H(+). Functionally, catalyzes the desulfonation of aliphatic sulfonates. In Agrobacterium fabrum (strain C58 / ATCC 33970) (Agrobacterium tumefaciens (strain C58)), this protein is Alkanesulfonate monooxygenase.